We begin with the raw amino-acid sequence, 266 residues long: Hydroxyethylthiazole kinase (266 aa).

M39 lines the substrate pocket. ATP contacts are provided by K115 and T160. Position 187 (G187) interacts with substrate.

Belongs to the Thz kinase family. The cofactor is Mg(2+).

It carries out the reaction 5-(2-hydroxyethyl)-4-methylthiazole + ATP = 4-methyl-5-(2-phosphooxyethyl)-thiazole + ADP + H(+). The protein operates within cofactor biosynthesis; thiamine diphosphate biosynthesis; 4-methyl-5-(2-phosphoethyl)-thiazole from 5-(2-hydroxyethyl)-4-methylthiazole: step 1/1. Catalyzes the phosphorylation of the hydroxyl group of 4-methyl-5-beta-hydroxyethylthiazole (THZ). This Staphylococcus aureus (strain MSSA476) protein is Hydroxyethylthiazole kinase.